The chain runs to 466 residues: 55 kDa erythrocyte membrane protein (466 aa).

Residue Thr-2 is modified to N-acetylthreonine. Residues Ser-13 and Ser-19 each carry the phosphoserine modification. At Thr-49 the chain carries Phosphothreonine. Residues Ser-52, Ser-57, and Ser-110 each carry the phosphoserine modification. A PDZ domain is found at 71–152; the sequence is LIQFEKVTEE…MISLKVIPNQ (82 aa). One can recognise an SH3 domain in the interval 158–228; it reads ALQMFMRAQF…PSPELQEWRV (71 aa). Phosphoserine is present on Ser-243. The tract at residues 268 to 466 is interaction with PALS1; the sequence is VVSYEEVVRL…PQWVPVSWVY (199 aa). The 170-residue stretch at 282–451 folds into the Guanylate kinase-like domain; sequence RKTLVLIGAS…TLKKLQEAFD (170 aa).

It belongs to the MAGUK family. As to quaternary structure, heterodimer with PALS1. Interacts with DLG5 and NF2. Interacts (via guanylate kinase-like domain) with WHRN (via third PDZ domain). Post-translationally, palmitoylated. Ubiquitous.

The protein resides in the cell membrane. It localises to the cell projection. It is found in the stereocilium. Essential regulator of neutrophil polarity. Regulates neutrophil polarization by regulating AKT1 phosphorylation through a mechanism that is independent of PIK3CG activity. This chain is 55 kDa erythrocyte membrane protein (MPP1), found in Homo sapiens (Human).